We begin with the raw amino-acid sequence, 120 residues long: C-C motif chemokine 27 (120 aa).

An N-terminal signal peptide occupies residues 1 to 25; it reads MMEGLSPASSLPLLLLLLSPAPEAA. Intrachain disulfides connect cysteine 34–cysteine 63 and cysteine 35–cysteine 78.

Belongs to the intercrine beta (chemokine CC) family. Monomer, dimer, and tetramer. Heparin avidly promotes oligomerization. Interacts with TNFAIP6 (via Link domain). As to expression, isoform 1 is predominantly expressed in placenta and weakly in skin. Isoform 2 is predominantly expressed in testes and brain, weakly in kidney and liver and even lower in heart and muscle. Low expression of both isoforms in other tissues.

It is found in the secreted. The protein resides in the nucleus. In terms of biological role, chemotactic factor that attracts skin-associated memory T-lymphocytes. May play a role in mediating homing of lymphocytes to cutaneous sites. May play a role in cell migration during embryogenesis. Nuclear forms may facilitate cellular migration by inducing cytoskeletal relaxation. Binds to CCR10. In Mus musculus (Mouse), this protein is C-C motif chemokine 27 (Ccl27).